Consider the following 65-residue polypeptide: uncharacterized protein (65 aa).

The protein to E.coli YjiX.

This is an uncharacterized protein from Escherichia coli O6:H1 (strain CFT073 / ATCC 700928 / UPEC).